A 209-amino-acid chain; its full sequence is MTRHTETAILAGGCFWGMQDLLRRYPGVLHTRVGYTGGDVPNATYRNHGNHAEAIEIVFDPAVISYRQILEFFFQIHDPSTPNRQGNDLGPSYRSAIYYLNEQQRDIAEDTAADVDASHLWPGRVVTEIEPAGPFWEAEPEHQDYLERIPNGYTCHFIRRMEAPQARLKVEFVRRRGDRFRPFSALTTGGNQPGARGGLTNNTCQHPRH.

C14 is an active-site residue. A disordered region spans residues 183-209 (FSALTTGGNQPGARGGLTNNTCQHPRH). Residues 199–209 (LTNNTCQHPRH) are compositionally biased toward polar residues.

It belongs to the MsrA Met sulfoxide reductase family.

It catalyses the reaction L-methionyl-[protein] + [thioredoxin]-disulfide + H2O = L-methionyl-(S)-S-oxide-[protein] + [thioredoxin]-dithiol. The enzyme catalyses [thioredoxin]-disulfide + L-methionine + H2O = L-methionine (S)-S-oxide + [thioredoxin]-dithiol. Its function is as follows. Has an important function as a repair enzyme for proteins that have been inactivated by oxidation. Catalyzes the reversible oxidation-reduction of methionine sulfoxide in proteins to methionine. The sequence is that of Peptide methionine sulfoxide reductase MsrA from Pseudomonas fluorescens.